The chain runs to 291 residues: Pituitary-specific positive transcription factor 1 (291 aa).

The 9aaTAD motif lies at 5-13 (PFTSTDTFI). The POU-specific domain occupies 124–198 (MDSPEIRELE…ILFKWLEEAE (75 aa)). The segment at residues 214–273 (KRKRRTTISIAAKDALERHFGEQNKPSSQEILRMAEELNLEKEVVRVWFCNRRQREKRVK) is a DNA-binding region (homeobox).

The protein belongs to the POU transcription factor family. Class-1 subfamily. Interacts with PITX1. Interacts with LHX3. Interacts with ELK1.

It is found in the nucleus. In terms of biological role, transcription factor involved in the specification of the lactotrope, somatotrope, and thyrotrope phenotypes in the developing anterior pituitary. Activates growth hormone and prolactin genes. Specifically binds to the consensus sequence 5'-TAAAT-3'. The chain is Pituitary-specific positive transcription factor 1 (POU1F1) from Ovis aries (Sheep).